The sequence spans 793 residues: Potassium transporter 18 (793 aa).

Residues 1–53 (METRTNEYSRKGAMWELERNLDQPMDAEAGRLRNMYREKTYPTILLLRLAFQS) are Cytoplasmic-facing. A helical membrane pass occupies residues 54-74 (LGVVFGDLGTSPLYVFYNIFP). The Extracellular segment spans residues 75–86 (HGIEDTEQVIGA). The chain crosses the membrane as a helical span at residues 87–107 (LSLIIYSLTLIPLVKYVFIVL). The Cytoplasmic segment spans residues 108–172 (RANDNGQGGT…WLEGHQFRKN (65 aa)). A helical membrane pass occupies residues 173–193 (LILILVLFGTCMAVGDGILTP). Residues 194–214 (AISVLSATGGIQVEEGRMRND) lie on the Extracellular side of the membrane. A helical membrane pass occupies residues 215-235 (VVVIISVLILIGLFSMQHYGT). Residues 236–237 (DK) are Cytoplasmic-facing. A helical membrane pass occupies residues 238–258 (VSWLFAPIVFVWFILIGILGA). Residues 259 to 287 (VNICKYDHSVLKAFNPVYVYRYFKRGKTS) lie on the Extracellular side of the membrane. A helical transmembrane segment spans residues 288 to 308 (WTSLGGIMLSITGTEALFADL). Residue serine 309 is a topological domain, cytoplasmic. The helical transmembrane segment at 310-330 (YFPVQAIQIAFTVVVFPCLLL) threads the bilayer. The Extracellular segment spans residues 331 to 351 (QYTGQAAFIAANTNQVSHAFY). A helical membrane pass occupies residues 352–372 (ISLPAPILWPAFAVATAAAIV). Residues 373 to 409 (ASQATISATYSIIKQALALGCFPRVKIIHTSKKYLGQ) lie on the Cytoplasmic side of the membrane. The chain crosses the membrane as a helical span at residues 410-430 (IYSPDINWILMVFCIAVTAGF). Residues 431 to 442 (KNQSQIANAYGT) lie on the Extracellular side of the membrane. N-linked (GlcNAc...) asparagine glycosylation occurs at asparagine 432. The helical transmembrane segment at 443–463 (AVIMVMLVTTFLMIPIMLLVW) threads the bilayer. Residues 464–468 (RSHWT) are Cytoplasmic-facing. The helical transmembrane segment at 469–489 (LVVAFTVLSLLVEIPYFSAVV) threads the bilayer. Topologically, residues 490–494 (RKIDQ) are extracellular. A helical membrane pass occupies residues 495–515 (GGWVPLVFAAGFMIIMYVWHY). Topologically, residues 516–793 (GTLKRYEFEM…MLNVGQVFYV (278 aa)) are cytoplasmic.

Belongs to the HAK/KUP transporter (TC 2.A.72.3) family.

Its subcellular location is the membrane. Functionally, high-affinity potassium transporter. This Oryza sativa subsp. japonica (Rice) protein is Potassium transporter 18 (HAK18).